An 84-amino-acid chain; its full sequence is Large ribosomal subunit protein bL27 (84 aa).

The tract at residues 1 to 24 (MAHKKGAASTKNGRDSNSQRLGVK) is disordered. A compositionally biased stretch (polar residues) spans 9–20 (STKNGRDSNSQR).

It belongs to the bacterial ribosomal protein bL27 family.

The chain is Large ribosomal subunit protein bL27 from Nocardioides sp. (strain ATCC BAA-499 / JS614).